Here is a 283-residue protein sequence, read N- to C-terminus: MPHRKERPSGSSLNAHGSSGTAEGGNMSRLSLTRSPVSPLAAQGIPLPAQLTKANAPVHIDVGGHMYTSSLATLTKYPDSRISRLFNGTEPIVLDSLKQHYFIDRDGEIFRYILSFLRTSKLLLPDDFKDFNLLYEEARYYQLQPMVRELERWQQDQEQRRRSRACDCLVVRVTPDLGERIALSGEKALIEEVFPETGDVMCNSVNAGWNQDPTHVIRFPLNGYCRLNSVQVLERLFQRGFSVAASCGGGVDSSQFSEYVLCREERRPQPTPTAVRIKQEPLD.

The disordered stretch occupies residues 1-33 (MPHRKERPSGSSLNAHGSSGTAEGGNMSRLSLT). Polar residues predominate over residues 9–21 (SGSSLNAHGSSGT). Ser31, Ser35, and Ser38 each carry phosphoserine. The 71-residue stretch at 56-126 (APVHIDVGGH…LRTSKLLLPD (71 aa)) folds into the BTB domain.

In terms of assembly, forms oligomers, predominantly homopentamers. Interacts with KCTD1, probably forming heteropentamers depending on its abundance in a cell-type dependent manner. Interacts with TFAP2A; this interaction inhibits TFAP2A transcriptional activation. Expressed in the cerebral cortex, cerebellum, and hypothalamus (at protein level). Expressed in the arcuate hypothalamic nucleus, the ventromedial hypothalamic nucleus and the accumbens nucleus of the ventral striatum.

It is found in the nucleus. Its function is as follows. During embryonic development, interferes with neural crest formation. Inhibits AP2 transcriptional activity by interaction with its activation domain. This chain is BTB/POZ domain-containing protein KCTD15 (Kctd15), found in Mus musculus (Mouse).